Consider the following 137-residue polypeptide: Small ribosomal subunit protein uS11 (137 aa).

2 disordered regions span residues 1-32 and 118-137; these read MPPK…AHIK and ISDV…RRRV. Positions 12–21 are enriched in basic residues; that stretch reads KTQKSRRRDK.

The protein belongs to the universal ribosomal protein uS11 family. Part of the 30S ribosomal subunit. Interacts with proteins S7 and S18. Binds to IF-3.

Functionally, located on the platform of the 30S subunit, it bridges several disparate RNA helices of the 16S rRNA. Forms part of the Shine-Dalgarno cleft in the 70S ribosome. This Nocardia farcinica (strain IFM 10152) protein is Small ribosomal subunit protein uS11.